The sequence spans 109 residues: Iron-sulfur cluster assembly protein CyaY (109 aa).

It belongs to the frataxin family.

Functionally, involved in iron-sulfur (Fe-S) cluster assembly. May act as a regulator of Fe-S biogenesis. This chain is Iron-sulfur cluster assembly protein CyaY, found in Bordetella avium (strain 197N).